We begin with the raw amino-acid sequence, 600 residues long: 69 kDa paraflagellar rod protein (600 aa).

Residues 335-355 (DKQDEAWRRIQELERVLQRLG) are calmodulin-binding.

As to quaternary structure, heterodimer of a 69 kDa and a 73 kDa protein.

The protein localises to the cell projection. The protein resides in the cilium. It is found in the flagellum. It localises to the cytoplasm. Its subcellular location is the cytoskeleton. Functionally, major component of the paraflagellar rod (PFR). The PFR is a highly ordered lattices of fibrous proteins that are located inside the flagellum and assume a fixed orientation with respect to the microtubular axoneme. The chain is 69 kDa paraflagellar rod protein (PFRA) from Trypanosoma brucei brucei.